The chain runs to 384 residues: S-adenosylmethionine synthase (384 aa).

H16 serves as a coordination point for ATP. D18 provides a ligand contact to Mg(2+). Residue E44 coordinates K(+). Residues E57 and Q100 each coordinate L-methionine. The segment at 100 to 110 (QSADIAMGVDE) is flexible loop. Residues 165–167 (DAK), D240, 246–247 (RK), A263, and K267 each bind ATP. D240 contributes to the L-methionine binding site. Residue K271 participates in L-methionine binding.

It belongs to the AdoMet synthase family. As to quaternary structure, homotetramer; dimer of dimers. Requires Mg(2+) as cofactor. K(+) serves as cofactor.

The protein localises to the cytoplasm. The catalysed reaction is L-methionine + ATP + H2O = S-adenosyl-L-methionine + phosphate + diphosphate. It functions in the pathway amino-acid biosynthesis; S-adenosyl-L-methionine biosynthesis; S-adenosyl-L-methionine from L-methionine: step 1/1. In terms of biological role, catalyzes the formation of S-adenosylmethionine (AdoMet) from methionine and ATP. The overall synthetic reaction is composed of two sequential steps, AdoMet formation and the subsequent tripolyphosphate hydrolysis which occurs prior to release of AdoMet from the enzyme. The polypeptide is S-adenosylmethionine synthase (Cellvibrio japonicus (strain Ueda107) (Pseudomonas fluorescens subsp. cellulosa)).